Here is a 399-residue protein sequence, read N- to C-terminus: uncharacterized protein (399 aa).

This sequence belongs to the NADH:flavin oxidoreductase/NADH oxidase family. As to quaternary structure, directly interacts with lipoylated GcvH-L (SpyM50867).

This is an uncharacterized protein from Streptococcus pyogenes serotype M5 (strain Manfredo).